Reading from the N-terminus, the 96-residue chain is Large ribosomal subunit protein bL28 (96 aa).

The interval 1 to 24 (MSRSCELTGKGVQSGHNVSHANNK) is disordered.

The protein belongs to the bacterial ribosomal protein bL28 family.

The polypeptide is Large ribosomal subunit protein bL28 (Sinorhizobium fredii (strain NBRC 101917 / NGR234)).